A 264-amino-acid polypeptide reads, in one-letter code: Versicolorin reductase stcU (264 aa).

NADP(+) contacts are provided by Ile-23, Asp-69, Asn-96, and Arg-129. Active-site proton donor residues include Ser-145 and Ser-146. Tyr-160, Lys-164, Ile-193, and Thr-195 together coordinate NADP(+). Tyr-160 functions as the Proton acceptor in the catalytic mechanism. The active-site Lowers pKa of active site Tyr is the Lys-164.

This sequence belongs to the short-chain dehydrogenases/reductases (SDR) family.

It catalyses the reaction (4S,8R)-2,13,16,20-tetrahydroxy-7,9-dioxapentacyclo[10.8.0.0(3,10).0(4,8).0(14,19)]icosa-1(12),2,5,10,13,16,19-heptaen-18-one + NADPH + H(+) = (4S,8R,16R)-2,13,16,20-tetrahydroxy-7,9-dioxapentacyclo[10.8.0.0(3,10).0(4,8).0(14,19)]icosa-1(12),2,5,10,13,19-hexaen-18-one + NADP(+). Its pathway is mycotoxin biosynthesis; sterigmatocystin biosynthesis. Versicolorin reductase; part of the gene cluster that mediates the biosynthesis of sterigmatocystin (ST), a polyketide-derived furanocoumarin which is part of the most toxic and carcinogenic compounds among the known mycotoxins. The first step in the biosynthesis of sterigmatocystin is the production of hexanoate by the fatty acid synthase (FAS) units stcJ and stcK. The polyketide backbone is assembled by the non-reducing polyketide synthase stcA by condensation of the starter hexanoyl-CoA and 7 malonyl-CoA extender units followed by cyclization and release of norsolorinic acid. Norsolorinic acid is the first stable intermediate in the biosynthesis of sterigmatocystin and is converted into averantin (AVN) by the ketoreductase stcE which reduces the hexanoate ketone to an alcohol. Averantin is then oxidized into 5'-hydroxyaverantin (HAVN) by the cytochrome P450 monooxygenase stcF. 5'-hydroxyaverantin is further converted to 5'-oxyaverantin (OAVN) by the 5'-hydroxyaverantin dehydrogenase stcG. The next step is the conversion of OAVN into averufin (AVF) which is catalyzed by a yet to be identified enzyme. The cytochrome P450 monooxygenase stcB and the flavin-binding monooxygenase stcW are both required for the conversion of averufin to 1-hydroxyversicolorone. The esterase stcI probably catalyzes the formation of versiconal hemiacetal acetate from 1-hydroxyversicolorone. The oxydoreductase stcN then probably catalyzes the biosynthetic step from versiconal to versicolorin B (VERB). The next step is performed by the versicolorin B desaturase stcL to produce versicolorin A (VERA). The ketoreductase stcU and the cytochrome P450 monooxygenase stcS are involved in the conversion of versicolorin A to demethylsterigmatocystin. The Baeyer-Villiger oxidas stcQ and the reductase stcR might be involved in the biosynthetic step from versicolorin A to demethylsterigmatocystin. The final step in the biosynthesis of sterigmatocystin is the methylation of demethylsterigmatocystin catalyzed by the methyltransferase stcP. This is Versicolorin reductase stcU from Emericella nidulans (strain FGSC A4 / ATCC 38163 / CBS 112.46 / NRRL 194 / M139) (Aspergillus nidulans).